The sequence spans 365 residues: MTGDYKEYKGYALITGGAGFIGSNFLDYAVDKYPDFHFTCIDKLSYVSNYTTVFLSKVLNQPNFRFLEMDLATNYKFLYQFMVEDSEINKITHIINFAAESSVDRSFIDPLYFTKNNILSTQNLLECVRILLGKKEELRNRLNFVHVSTDEVYGEQDENASVDEKSKLNPTSPYAASKAAVDLIIQSYRYSYKISVTVIRANNVYGPRQYEEKLIPMTLGKLKKFINQKSQKIMQDKITLHGDGLHKRKYLHIYDFINAIDLVWMKQGSEVYHSTLESKMSGQIFNIGSDDEIDNLSLVKFICDYFLYRKLSLKNLDYSKYITFVQDRNYNDSRYSLNYEKIKSLGWRPQIPLETGLRKLIDEYY.

The protein belongs to the NAD(P)-dependent epimerase/dehydratase family.

The protein resides in the cytoplasm. It is found in the nucleus. This is an uncharacterized protein from Schizosaccharomyces pombe (strain 972 / ATCC 24843) (Fission yeast).